A 452-amino-acid chain; its full sequence is Tripartite motif-containing protein 49D (452 aa).

The RING-type zinc finger occupies 15 to 56 (CPICLNYFIDPVTIDCGHSFCRPCFYLNWQDIPILTQCFECL). The segment at 88–129 (SEEQMCGTHRETKKIFCEVDRSLLCLLCSSSLEHRYHRHCPA) adopts a B box-type zinc-finger fold. Cysteine 93, histidine 96, cysteine 115, and histidine 121 together coordinate Zn(2+). The B30.2/SPRY domain occupies 269–452 (ELRAGPITGL…LRPIFCCVHL (184 aa)).

It belongs to the TRIM/RBCC family.

This chain is Tripartite motif-containing protein 49D, found in Homo sapiens (Human).